A 219-amino-acid chain; its full sequence is Thiamine-phosphate synthase (219 aa).

4-amino-2-methyl-5-(diphosphooxymethyl)pyrimidine is bound by residues 44–48 (QFREK) and Asn79. 2 residues coordinate Mg(2+): Asp80 and Asp99. Residue Ser117 participates in 4-amino-2-methyl-5-(diphosphooxymethyl)pyrimidine binding. 2-[(2R,5Z)-2-carboxy-4-methylthiazol-5(2H)-ylidene]ethyl phosphate is bound at residue 143 to 145 (TST). 4-amino-2-methyl-5-(diphosphooxymethyl)pyrimidine is bound at residue Lys146. 2-[(2R,5Z)-2-carboxy-4-methylthiazol-5(2H)-ylidene]ethyl phosphate is bound by residues Gly175 and 195-196 (IS).

The protein belongs to the thiamine-phosphate synthase family. Mg(2+) serves as cofactor.

The catalysed reaction is 2-[(2R,5Z)-2-carboxy-4-methylthiazol-5(2H)-ylidene]ethyl phosphate + 4-amino-2-methyl-5-(diphosphooxymethyl)pyrimidine + 2 H(+) = thiamine phosphate + CO2 + diphosphate. The enzyme catalyses 2-(2-carboxy-4-methylthiazol-5-yl)ethyl phosphate + 4-amino-2-methyl-5-(diphosphooxymethyl)pyrimidine + 2 H(+) = thiamine phosphate + CO2 + diphosphate. It carries out the reaction 4-methyl-5-(2-phosphooxyethyl)-thiazole + 4-amino-2-methyl-5-(diphosphooxymethyl)pyrimidine + H(+) = thiamine phosphate + diphosphate. It participates in cofactor biosynthesis; thiamine diphosphate biosynthesis; thiamine phosphate from 4-amino-2-methyl-5-diphosphomethylpyrimidine and 4-methyl-5-(2-phosphoethyl)-thiazole: step 1/1. In terms of biological role, condenses 4-methyl-5-(beta-hydroxyethyl)thiazole monophosphate (THZ-P) and 2-methyl-4-amino-5-hydroxymethyl pyrimidine pyrophosphate (HMP-PP) to form thiamine monophosphate (TMP). The polypeptide is Thiamine-phosphate synthase (Bacillus anthracis (strain A0248)).